A 386-amino-acid polypeptide reads, in one-letter code: uncharacterized protein (386 aa).

The next 2 membrane-spanning stretches (helical) occupy residues 54–74 (AVLQ…AIVA) and 347–367 (LLGG…PIAG).

It to M.tuberculosis Rv0628c.

It localises to the cell membrane. This is an uncharacterized protein from Mycobacterium tuberculosis (strain CDC 1551 / Oshkosh).